Reading from the N-terminus, the 474-residue chain is Probable fucosyltransferase 9 (474 aa).

The helical; Signal-anchor for type II membrane protein transmembrane segment at 1-21 (MIKLTIAIATCLVLCLVLLLP) threads the bilayer. At 22–474 (SSNISYRHKY…LKLVDVSDEL (453 aa)) the chain is on the lumenal side. N-linked (GlcNAc...) asparagine glycans are attached at residues Asn-24, Asn-39, and Asn-208.

The protein belongs to the glycosyltransferase 37 family. Expressed in leaves and stems.

It localises to the golgi apparatus. It is found in the golgi stack membrane. It participates in protein modification; protein glycosylation. Its function is as follows. May be involved in cell wall biosynthesis. May act as a fucosyltransferase. This Arabidopsis thaliana (Mouse-ear cress) protein is Probable fucosyltransferase 9 (FUT9).